A 162-amino-acid chain; its full sequence is Large ribosomal subunit protein bL17 (162 aa).

A disordered region spans residues 126 to 162 (ATAKKATRTRRSKKSAAATEAPAAPAAETTEEAPKAE). Positions 130 to 139 (KATRTRRSKK) are enriched in basic residues. Residues 140–153 (SAAATEAPAAPAAE) show a composition bias toward low complexity.

It belongs to the bacterial ribosomal protein bL17 family. Part of the 50S ribosomal subunit. Contacts protein L32.

The polypeptide is Large ribosomal subunit protein bL17 (Phocaeicola vulgatus (strain ATCC 8482 / DSM 1447 / JCM 5826 / CCUG 4940 / NBRC 14291 / NCTC 11154) (Bacteroides vulgatus)).